Consider the following 154-residue polypeptide: Large ribosomal subunit protein uL13 (154 aa).

A disordered region spans residues 129–154 (SQHPHEAQQPEALDVGTLNRKNKRIA).

Belongs to the universal ribosomal protein uL13 family. As to quaternary structure, part of the 50S ribosomal subunit.

Its function is as follows. This protein is one of the early assembly proteins of the 50S ribosomal subunit, although it is not seen to bind rRNA by itself. It is important during the early stages of 50S assembly. This is Large ribosomal subunit protein uL13 from Bartonella bacilliformis (strain ATCC 35685 / KC583 / Herrer 020/F12,63).